Reading from the N-terminus, the 1253-residue chain is Cytoplasmic FMR1-interacting protein 2 (1253 aa).

N6-acetyllysine is present on Lys-1037.

The protein belongs to the CYFIP family. As to quaternary structure, component of the WAVE1 complex composed of ABI2, CYFIP2, BRK1, NCKAP1 and WASF1/WAVE1. Interacts with RAC1 (activated form) which causes the complex to dissociate, releasing activated WASF1. The complex can also be activated by NCK1. Interacts with SHANK3; the interaction mediates the association of SHANK3 with the WAVE1 complex. Interacts with FMR1; the interaction occurs in a RNA-dependent manner. Interacts with FXR1 and FXR2. Interacts with TMEM108 (via N-terminus); the interaction associates TMEM108 with the WAVE1 complex.

It localises to the cytoplasm. It is found in the nucleus. Its subcellular location is the perinuclear region. The protein localises to the synapse. The protein resides in the synaptosome. Functionally, involved in T-cell adhesion and p53-dependent induction of apoptosis. Does not bind RNA. As component of the WAVE1 complex, required for BDNF-NTRK2 endocytic trafficking and signaling from early endosomes. The chain is Cytoplasmic FMR1-interacting protein 2 from Pongo abelii (Sumatran orangutan).